A 152-amino-acid polypeptide reads, in one-letter code: Large ribosomal subunit protein uL13 (152 aa).

Belongs to the universal ribosomal protein uL13 family. Part of the 50S ribosomal subunit.

Its function is as follows. This protein is one of the early assembly proteins of the 50S ribosomal subunit, although it is not seen to bind rRNA by itself. It is important during the early stages of 50S assembly. The protein is Large ribosomal subunit protein uL13 of Neorickettsia sennetsu (strain ATCC VR-367 / Miyayama) (Ehrlichia sennetsu).